Here is a 241-residue protein sequence, read N- to C-terminus: Glutathione S-transferase omega-1 (241 aa).

Ser2 carries the N-acetylserine modification. The GST N-terminal domain occupies 22-101 (GLIRVYSMRF…YLDEAYPGKK (80 aa)). The Nucleophile role is filled by Cys32. Lys57 carries the post-translational modification N6-acetyllysine. Glutathione contacts are provided by residues Lys59, Val72, and 85 to 86 (ES). The 120-residue stretch at 106–225 (DPYEKACQKM…HIEPRDLRAF (120 aa)) folds into the GST C-terminal domain. N6-acetyllysine occurs at positions 143, 148, and 152.

In terms of assembly, homodimer. As to expression, most abundant in the liver and skeletal muscle; also expressed in heart, diaphragm, colon, thymus, kidney, lung, ovaries, spleen, intestine and pancreas.

It is found in the cytoplasm. It localises to the cytosol. The catalysed reaction is RX + glutathione = an S-substituted glutathione + a halide anion + H(+). The enzyme catalyses L-dehydroascorbate + 2 glutathione = glutathione disulfide + L-ascorbate. It catalyses the reaction methylarsonate + 2 glutathione + H(+) = methylarsonous acid + glutathione disulfide + H2O. Functionally, exhibits glutathione-dependent thiol transferase and dehydroascorbate reductase activities. Has S-(phenacyl)glutathione reductase activity. Also has glutathione S-transferase activity. Participates in the biotransformation of inorganic arsenic and reduces monomethylarsonic acid (MMA) and dimethylarsonic acid. This Sus scrofa (Pig) protein is Glutathione S-transferase omega-1 (GSTO1).